The following is a 409-amino-acid chain: Elongation factor Tu, chloroplastic (409 aa).

The 205-residue stretch at 10–214 (KPHVNIGTIG…AVDAYIPTPE (205 aa)) folds into the tr-type G domain. The segment at 19–26 (GHVDHGKT) is G1. 19-26 (GHVDHGKT) contacts GTP. Thr-26 provides a ligand contact to Mg(2+). Residues 60–64 (GITIN) are G2. The interval 81-84 (DCPG) is G3. GTP contacts are provided by residues 81–85 (DCPGH) and 136–139 (NKQD). Positions 136–139 (NKQD) are G4. Residues 174–176 (SAL) are G5.

The protein belongs to the TRAFAC class translation factor GTPase superfamily. Classic translation factor GTPase family. EF-Tu/EF-1A subfamily.

Its subcellular location is the plastid. It is found in the chloroplast. It catalyses the reaction GTP + H2O = GDP + phosphate + H(+). Functionally, GTP hydrolase that promotes the GTP-dependent binding of aminoacyl-tRNA to the A-site of ribosomes during protein biosynthesis. This Thalassiosira pseudonana (Marine diatom) protein is Elongation factor Tu, chloroplastic (tufA).